The sequence spans 215 residues: Cytochrome b6 (215 aa).

Residues 32–52 (IFYCFGGITFTCFLVQVATGF) traverse the membrane as a helical segment. A heme c-binding site is contributed by cysteine 35. The heme b site is built by histidine 86 and histidine 100. The next 3 membrane-spanning stretches (helical) occupy residues 90-110 (ASMM…TGGF), 116-136 (LTWV…VTGY), and 186-206 (LHTF…FLMI). Histidine 187 and histidine 202 together coordinate heme b.

The protein belongs to the cytochrome b family. PetB subfamily. In terms of assembly, the 4 large subunits of the cytochrome b6-f complex are cytochrome b6, subunit IV (17 kDa polypeptide, PetD), cytochrome f and the Rieske protein, while the 4 small subunits are PetG, PetL, PetM and PetN. The complex functions as a dimer. It depends on heme b as a cofactor. Heme c is required as a cofactor.

Its subcellular location is the plastid. The protein resides in the chloroplast thylakoid membrane. Functionally, component of the cytochrome b6-f complex, which mediates electron transfer between photosystem II (PSII) and photosystem I (PSI), cyclic electron flow around PSI, and state transitions. The protein is Cytochrome b6 of Auxenochlorella protothecoides (Green microalga).